Consider the following 190-residue polypeptide: Nucleoside triphosphate pyrophosphatase (190 aa).

Residue aspartate 69 is the Proton acceptor of the active site.

Belongs to the Maf family. A divalent metal cation is required as a cofactor.

It is found in the cytoplasm. It carries out the reaction a ribonucleoside 5'-triphosphate + H2O = a ribonucleoside 5'-phosphate + diphosphate + H(+). It catalyses the reaction a 2'-deoxyribonucleoside 5'-triphosphate + H2O = a 2'-deoxyribonucleoside 5'-phosphate + diphosphate + H(+). In terms of biological role, nucleoside triphosphate pyrophosphatase. May have a dual role in cell division arrest and in preventing the incorporation of modified nucleotides into cellular nucleic acids. The polypeptide is Nucleoside triphosphate pyrophosphatase (Helicobacter pylori (strain P12)).